The primary structure comprises 4885 residues: Centrosome-associated protein CEP530 (4885 aa).

The stretch at 1437-1528 (VAEYEAETRG…GREKDQLRSE (92 aa)) forms a coiled coil.

It is found in the cytoplasm. It localises to the cytoskeleton. Its subcellular location is the microtubule organizing center. The protein resides in the centrosome. Functionally, required for proper nuclei segregation during the cell division. Plays a role in coordination of karyokinesis and cytokinesis during the tachyzoite cell cycle. This Toxoplasma gondii (strain ATCC 50611 / Me49) protein is Centrosome-associated protein CEP530.